A 522-amino-acid polypeptide reads, in one-letter code: Cytochrome P450 monooxygenase FGSG_08207 (522 aa).

The helical transmembrane segment at 10–30 (LLLSKPVVLGLAACALLFLIG) threads the bilayer. 2 N-linked (GlcNAc...) asparagine glycosylation sites follow: Asn104 and Asn155. Cys441 is a heme binding site.

The protein belongs to the cytochrome P450 family. The cofactor is heme.

It localises to the membrane. It participates in secondary metabolite biosynthesis. Cytochrome P450 monooxygenase; part of the gene cluster that mediates the biosynthesis of the lipopeptide fusaristatin A. Fusaristatin A consists of a polyketide chain linked to three amino acid residues glutamine (Gln), dehydroalanine (dehydro-Ala), and beta-aminoisobutyric acid. The biosynthesis starts with formation of a linear polyketide chain by the highly reducing polyketide synthase PKS6. The gene cluster does not contain an acyl-CoA ligase or an acyl-transferase, and it is therefore predicted that the polyketide is transferred directly to the nonribosomal peptide synthetase NRPS7. Modules 1-3 from NRPS7 incorporate dehydro-Ala, Gln, and beta-aminoisobutyric acid in the compound, which is released by cyclization. The beta-aminoisobutyric acid units are most likely not freely available to the NRPS, but can be synthesized from thymine, which requires a dehydrogenase, a monooxygenase, and an aminotransferase. The fusaristatin A cluster contains a cytochrome P450 monooxygenase (FGSG_08207) and an aminotransferase (FGSG_17085), which theoretically can perform two of the enzymatic steps. The enzymes may however also be involved in biosynthesis of dehydroalanine or modification of the polyketide. The dehydro-Ala residue can be a result of cyclization, where serine is dehydrated. The last gene of the cluster encodes a protein with an A/B barrel domain found in variable enzymes, which hampers functional prediction. The sequence is that of Cytochrome P450 monooxygenase FGSG_08207 from Gibberella zeae (strain ATCC MYA-4620 / CBS 123657 / FGSC 9075 / NRRL 31084 / PH-1) (Wheat head blight fungus).